A 427-amino-acid chain; its full sequence is UBX domain-containing protein 10 (427 aa).

Residues 247-311 (LERFRSEREA…VQKKKKQYRA (65 aa)) are a coiled coil. The region spanning 323 to 425 (SEDEPARLSI…FPNGTVVVEL (103 aa)) is the UBX domain.

Its subcellular location is the endoplasmic reticulum. In terms of biological role, involved in protein degradation through the ubiquitin/proteasome pathway. This chain is UBX domain-containing protein 10 (ucp10), found in Schizosaccharomyces pombe (strain 972 / ATCC 24843) (Fission yeast).